Reading from the N-terminus, the 161-residue chain is Cyclic pyranopterin monophosphate synthase (161 aa).

Residues Leu75 to His77 and Met113 to Glu114 each bind substrate. Residue Asp128 is part of the active site.

The protein belongs to the MoaC family. In terms of assembly, homohexamer; trimer of dimers.

It catalyses the reaction (8S)-3',8-cyclo-7,8-dihydroguanosine 5'-triphosphate = cyclic pyranopterin phosphate + diphosphate. It participates in cofactor biosynthesis; molybdopterin biosynthesis. Catalyzes the conversion of (8S)-3',8-cyclo-7,8-dihydroguanosine 5'-triphosphate to cyclic pyranopterin monophosphate (cPMP). This Cupriavidus pinatubonensis (strain JMP 134 / LMG 1197) (Cupriavidus necator (strain JMP 134)) protein is Cyclic pyranopterin monophosphate synthase.